A 291-amino-acid polypeptide reads, in one-letter code: Homeobox protein knotted-1-like 7 (291 aa).

Residues 194-214 enclose the ELK domain; the sequence is ELKLELKQGFKSRIEDVREEI. The segment at residues 215–278 is a DNA-binding region (homeobox; TALE-type); sequence MRKRRAGKLP…NQRKRNWHNN (64 aa).

It belongs to the TALE/KNOX homeobox family. May form heterodimeric complex with the TALE/BELL proteins. Interacts with OFP1, OFP2, OFP3, OFP4 and OFP6.

It is found in the nucleus. In terms of biological role, may be involved in secondary cell wall biosynthesis. This Arabidopsis thaliana (Mouse-ear cress) protein is Homeobox protein knotted-1-like 7 (KNAT7).